The following is a 337-amino-acid chain: tRNA N6-adenosine threonylcarbamoyltransferase (337 aa).

Positions 111 and 115 each coordinate Fe cation. Substrate-binding positions include Leu134–Gly138, Asp167, Gly180, and Asn272. Asp300 serves as a coordination point for Fe cation.

The protein belongs to the KAE1 / TsaD family. It depends on Fe(2+) as a cofactor.

Its subcellular location is the cytoplasm. It catalyses the reaction L-threonylcarbamoyladenylate + adenosine(37) in tRNA = N(6)-L-threonylcarbamoyladenosine(37) in tRNA + AMP + H(+). Functionally, required for the formation of a threonylcarbamoyl group on adenosine at position 37 (t(6)A37) in tRNAs that read codons beginning with adenine. Is involved in the transfer of the threonylcarbamoyl moiety of threonylcarbamoyl-AMP (TC-AMP) to the N6 group of A37, together with TsaE and TsaB. TsaD likely plays a direct catalytic role in this reaction. This Pectobacterium atrosepticum (strain SCRI 1043 / ATCC BAA-672) (Erwinia carotovora subsp. atroseptica) protein is tRNA N6-adenosine threonylcarbamoyltransferase.